The following is a 379-amino-acid chain: Orotidine 5'-phosphate decarboxylase (379 aa).

Substrate contacts are provided by residues Asp42, 64–66 (KTH), and 99–108 (DRKFGDIGHT). Residue Lys101 is the Proton donor of the active site. Residues 165-198 (PTMDQFDDAEDAKDDEPATVNDNGSNMMEKPIYA) are disordered. Over residues 169–178 (QFDDAEDAKD) the composition is skewed to acidic residues. Substrate is bound by residues Tyr331 and Arg350.

This sequence belongs to the OMP decarboxylase family.

The catalysed reaction is orotidine 5'-phosphate + H(+) = UMP + CO2. The protein operates within pyrimidine metabolism; UMP biosynthesis via de novo pathway; UMP from orotate: step 2/2. In Hypocrea atroviridis (Trichoderma atroviride), this protein is Orotidine 5'-phosphate decarboxylase (pyr4).